The following is a 155-amino-acid chain: RING finger protein 122 (155 aa).

Residues 40 to 60 (VIFGTGIFVFMLSLIFCCYFI) traverse the membrane as a helical segment. The RING-type; atypical zinc finger occupies 93 to 134 (CAVCLEDFKGKDELGVLPCQHAFHRKCLVKWLEVRCVCPMCN).

In terms of tissue distribution, widely expressed in several tissues and cell lines.

It is found in the golgi apparatus. The protein localises to the endoplasmic reticulum. It localises to the membrane. May induce necrosis and apoptosis. May play a role in cell viability. This Homo sapiens (Human) protein is RING finger protein 122 (RNF122).